The chain runs to 187 residues: Proenkephalin-A (187 aa).

4 propeptides span residues 52–70 (MDEL…EILA), 80–143 (DAEE…KMLQ), 153–163 (VGRPEWWMDYQ), and 173–187 (FADS…ESYS). The segment at 81 to 132 (AEEEEDALASSSDLLKELLGPGETETAAAPRGRDDEDVSKSHGGFMRALKGS) is disordered. Over residues 88–99 (LASSSDLLKELL) the composition is skewed to low complexity. Over residues 111-120 (RGRDDEDVSK) the composition is skewed to basic and acidic residues. A Phosphoserine modification is found at serine 187.

This sequence belongs to the opioid neuropeptide precursor family. In terms of processing, processed and degraded by ACE. Post-translationally, the N-terminal domain contains 6 conserved cysteines thought to be involved in disulfide bonding and/or processing. Proenkephalin-A is cleaved by CTSL to generate Met-enkephalin.

Its subcellular location is the cytoplasmic vesicle. The protein localises to the secretory vesicle. It localises to the chromaffin granule lumen. The protein resides in the secreted. Functionally, neuropeptide that competes with and mimic the effects of opiate drugs. They play a role in a number of physiologic functions, including pain perception and responses to stress. The sequence is that of Proenkephalin-A (PENK) from Felis catus (Cat).